We begin with the raw amino-acid sequence, 336 residues long: UbiA prenyltransferase domain-containing protein 1 (336 aa).

Ala-2 carries the N-acetylalanine modification. Transmembrane regions (helical) follow at residues 81–101 (LLLGCAVAVLAVHGAGNLVNT), 132–152 (FGVFLYTLGCVCAACLYYLSA), 158–178 (LALIYFGGLSGSFLYTGGIGF), 186–206 (LVILITFGPLAVMFAYAVQVG), 207–227 (SLAIFPLIYAIPLALSTEAIL), 243–265 (IVTLAILIGPTFSYVLYNTLLFV), 275–295 (THCSISLALPLLTIPMAFSLE), and 313–333 (LNLLLGLFYVFGIILAPAGSL).

It belongs to the UbiA prenyltransferase family. Interacts with HMGCR and SOAT1.

The protein resides in the endoplasmic reticulum membrane. The protein localises to the golgi apparatus membrane. It localises to the mitochondrion membrane. It carries out the reaction menadiol + (2E,6E,10E)-geranylgeranyl diphosphate = menaquinol-4 + diphosphate. The enzyme catalyses all-trans-decaprenyl diphosphate + 4-hydroxybenzoate = 4-hydroxy-3-(all-trans-decaprenyl)benzoate + diphosphate. Its pathway is quinol/quinone metabolism; menaquinone biosynthesis. The protein operates within cofactor biosynthesis; ubiquinone biosynthesis. In terms of biological role, prenyltransferase that mediates the formation of menaquinone-4 (MK-4) and coenzyme Q10. MK-4 is a vitamin K2 isoform required for endothelial cell development. Mediates the conversion of phylloquinone (PK) into MK-4, probably by cleaving the side chain of phylloquinone (PK) to release 2-methyl-1,4-naphthoquinone (menadione; K3) and then prenylating it with geranylgeranyl pyrophosphate (GGPP) to form MK-4. Also plays a role in cardiovascular development independently of MK-4 biosynthesis, by acting as a coenzyme Q10 biosynthetic enzyme: coenzyme Q10, also named ubiquinone, plays an important antioxidant role in the cardiovascular system. Mediates biosynthesis of coenzyme Q10 in the Golgi membrane, leading to protect cardiovascular tissues from NOS3/eNOS-dependent oxidative stress. This chain is UbiA prenyltransferase domain-containing protein 1 (Ubiad1), found in Mus musculus (Mouse).